A 112-amino-acid polypeptide reads, in one-letter code: Large ribosomal subunit protein eL30y (112 aa).

It belongs to the eukaryotic ribosomal protein eL30 family.

In Arabidopsis thaliana (Mouse-ear cress), this protein is Large ribosomal subunit protein eL30y (RPL30B).